The following is a 227-amino-acid chain: Lipoprotein-releasing system ATP-binding protein LolD (227 aa).

Positions 6-227 (LTSQKLYKSY…LHEGSLYARE (222 aa)) constitute an ABC transporter domain. 42–49 (GPSGSGKS) provides a ligand contact to ATP.

It belongs to the ABC transporter superfamily. Lipoprotein translocase (TC 3.A.1.125) family. As to quaternary structure, the complex is composed of two ATP-binding proteins (LolD) and two transmembrane proteins (LolC and LolE).

Its subcellular location is the cell inner membrane. Part of the ABC transporter complex LolCDE involved in the translocation of mature outer membrane-directed lipoproteins, from the inner membrane to the periplasmic chaperone, LolA. Responsible for the formation of the LolA-lipoprotein complex in an ATP-dependent manner. This is Lipoprotein-releasing system ATP-binding protein LolD from Legionella pneumophila (strain Paris).